The chain runs to 75 residues: Large ribosomal subunit protein bL31 (75 aa).

The protein belongs to the bacterial ribosomal protein bL31 family. Type A subfamily. Part of the 50S ribosomal subunit.

Binds the 23S rRNA. The polypeptide is Large ribosomal subunit protein bL31 (Acidiphilium cryptum (strain JF-5)).